The chain runs to 249 residues: Coproheme decarboxylase (249 aa).

Fe-coproporphyrin III-binding positions include Arg131, 145–149, His172, Gln185, and Ser223; that span reads YPMNK. The active site involves Tyr145.

It belongs to the ChdC family. Type 1 subfamily. Fe-coproporphyrin III serves as cofactor.

The enzyme catalyses Fe-coproporphyrin III + 2 H2O2 + 2 H(+) = heme b + 2 CO2 + 4 H2O. It carries out the reaction Fe-coproporphyrin III + H2O2 + H(+) = harderoheme III + CO2 + 2 H2O. The catalysed reaction is harderoheme III + H2O2 + H(+) = heme b + CO2 + 2 H2O. The protein operates within porphyrin-containing compound metabolism; protoheme biosynthesis. Functionally, involved in coproporphyrin-dependent heme b biosynthesis. Catalyzes the decarboxylation of Fe-coproporphyrin III (coproheme) to heme b (protoheme IX), the last step of the pathway. The reaction occurs in a stepwise manner with a three-propionate intermediate. This Thermus thermophilus (strain ATCC BAA-163 / DSM 7039 / HB27) protein is Coproheme decarboxylase.